Consider the following 284-residue polypeptide: RNase adapter protein RapZ (284 aa).

8 to 15 (GRSGSGKS) is a binding site for ATP. 56-59 (DVRN) provides a ligand contact to GTP. Positions 266–284 (RSRGKNVQSRHRTLEKRKT) are RNA-binding.

This sequence belongs to the RapZ-like family. RapZ subfamily. As to quaternary structure, homotrimer.

Modulates the synthesis of GlmS, by affecting the processing and stability of the regulatory small RNA GlmZ. When glucosamine-6-phosphate (GlcN6P) concentrations are high in the cell, RapZ binds GlmZ and targets it to cleavage by RNase E. Consequently, GlmZ is inactivated and unable to activate GlmS synthesis. Under low GlcN6P concentrations, RapZ is sequestered and inactivated by an other regulatory small RNA, GlmY, preventing GlmZ degradation and leading to synthesis of GlmS. In Escherichia fergusonii (strain ATCC 35469 / DSM 13698 / CCUG 18766 / IAM 14443 / JCM 21226 / LMG 7866 / NBRC 102419 / NCTC 12128 / CDC 0568-73), this protein is RNase adapter protein RapZ.